Reading from the N-terminus, the 559-residue chain is CRISPR-associated exonuclease Cas4/endonuclease Cas1 fusion (559 aa).

The interval 1–198 (MAETDGSIPL…RCSLVGICLP (198 aa)) is CRISPR-associated exonuclease Cas4. Position 22 (C22) interacts with [4Fe-4S] cluster. Mn(2+) contacts are provided by D87 and D100. The [4Fe-4S] cluster site is built by C187, C190, and C196. The CRISPR-associated endonuclease Cas1 stretch occupies residues 224–559 (LYVQSPKAYV…IPAYPNFVTR (336 aa)). Mn(2+) is bound by residues E380, H451, and E466.

It in the N-terminal section; belongs to the CRISPR-associated exonuclease Cas4 family. In the C-terminal section; belongs to the CRISPR-associated endonuclease Cas1 family. As to quaternary structure, homodimer, forms a heterotetramer with a Cas2 homodimer. [4Fe-4S] cluster serves as cofactor. It depends on Mg(2+) as a cofactor. The cofactor is Mn(2+).

It catalyses the reaction exonucleolytic cleavage in the 5'- to 3'-direction to yield nucleoside 3'-phosphates.. CRISPR (clustered regularly interspaced short palindromic repeat), is an adaptive immune system that provides protection against mobile genetic elements (viruses, transposable elements and conjugative plasmids). CRISPR clusters contain spacers, sequences complementary to antecedent mobile elements, and target invading nucleic acids. CRISPR clusters are transcribed and processed into CRISPR RNA (crRNA). The Cas4 region acts as a ssDNA exonuclease, while the Cas1 region acts as a dsDNA endonuclease. Involved in the integration of spacer DNA into the CRISPR cassette. In Geobacter sulfurreducens (strain ATCC 51573 / DSM 12127 / PCA), this protein is CRISPR-associated exonuclease Cas4/endonuclease Cas1 fusion (cas4-cas1).